Here is a 151-residue protein sequence, read N- to C-terminus: Putative transcriptional regulatory protein TK2151 (151 aa).

Belongs to the Tfx family.

Putative transcriptional regulator. The chain is Putative transcriptional regulatory protein TK2151 from Thermococcus kodakarensis (strain ATCC BAA-918 / JCM 12380 / KOD1) (Pyrococcus kodakaraensis (strain KOD1)).